Here is a 725-residue protein sequence, read N- to C-terminus: Protein ECM27 (725 aa).

12 helical membrane-spanning segments follow: residues 21–41 (VTFI…LGIC), 119–139 (VLGA…IIMS), 157–177 (LLFS…NQVT), 178–198 (VLNC…KLTF), 397–417 (ISDA…KLSC), 439–459 (LPII…CSIL), 470–490 (LVYL…TAFI), 526–546 (IQII…SLLA), 559–579 (ILGL…NSVG), 621–641 (LNSM…IGAF), 668–688 (FIVS…FFGG), and 704–724 (GISM…LELF).

Belongs to the Ca(2+):cation antiporter (CaCA) (TC 2.A.19) family.

It localises to the membrane. This chain is Protein ECM27 (ECM27), found in Saccharomyces cerevisiae (strain ATCC 204508 / S288c) (Baker's yeast).